A 248-amino-acid chain; its full sequence is tRNA (guanine-N(1)-)-methyltransferase (248 aa).

Residues Gly113 and 133–138 (IGDFVL) each bind S-adenosyl-L-methionine.

This sequence belongs to the RNA methyltransferase TrmD family. As to quaternary structure, homodimer.

The protein resides in the cytoplasm. It catalyses the reaction guanosine(37) in tRNA + S-adenosyl-L-methionine = N(1)-methylguanosine(37) in tRNA + S-adenosyl-L-homocysteine + H(+). In terms of biological role, specifically methylates guanosine-37 in various tRNAs. This Dehalococcoides mccartyi (strain ATCC BAA-2266 / KCTC 15142 / 195) (Dehalococcoides ethenogenes (strain 195)) protein is tRNA (guanine-N(1)-)-methyltransferase.